A 208-amino-acid polypeptide reads, in one-letter code: Adenylate kinase (208 aa).

10–15 (GAGKGT) lines the ATP pocket. Residues 30-59 (STGEMLRAAVAAGTPVGLKAKDVMASGGLV) form an NMP region. AMP is bound by residues threonine 31, arginine 36, 57-59 (GLV), 85-88 (GFPR), and glutamine 92. The LID stretch occupies residues 126–142 (SRVAEMTARGEQVRADD). Residue arginine 127 coordinates ATP. The AMP site is built by arginine 139 and arginine 150. Methionine 178 is a binding site for ATP.

The protein belongs to the adenylate kinase family. In terms of assembly, monomer.

The protein resides in the cytoplasm. It carries out the reaction AMP + ATP = 2 ADP. It functions in the pathway purine metabolism; AMP biosynthesis via salvage pathway; AMP from ADP: step 1/1. In terms of biological role, catalyzes the reversible transfer of the terminal phosphate group between ATP and AMP. Plays an important role in cellular energy homeostasis and in adenine nucleotide metabolism. This chain is Adenylate kinase, found in Nitrobacter hamburgensis (strain DSM 10229 / NCIMB 13809 / X14).